The chain runs to 451 residues: Sex peptide receptor-related protein 2 (451 aa).

The Extracellular portion of the chain corresponds to 1–63 (MNYEVYCGNA…DNLEIVVYGQ (63 aa)). Asparagine 15 carries an N-linked (GlcNAc...) asparagine glycan. The helical transmembrane segment at 64–84 (IFPILVLFAVFANAAVALVLS) threads the bilayer. Over 85-97 (KKHMITPTNVVLK) the chain is Cytoplasmic. A helical membrane pass occupies residues 98–118 (YMAIAELLVGLVPLPWTLFFF). The Extracellular portion of the chain corresponds to 119–140 (SMGNIKETHRLELWWCYLQKYS). The cysteines at positions 134 and 225 are disulfide-linked. A helical membrane pass occupies residues 141–161 (MDAFPPVFHMIAMWLTVLLAA). The Cytoplasmic portion of the chain corresponds to 162-183 (QRYVSISHPLHSRSACNVKNVR). Residues 184 to 204 (LATMIITVTSFLCGLPKSFDY) form a helical membrane-spanning segment. At 205–251 (EYETVHGWIYSHGNWTYASSCVMMPTAILTNMGQTVYFNIYFWTRAL) the chain is on the extracellular side. N-linked (GlcNAc...) asparagine glycosylation is present at asparagine 218. A helical membrane pass occupies residues 252–272 (GFIILPSFLLVLLNGLLIKGI). The Cytoplasmic segment spans residues 273–301 (RRAQRRKLRLLREKRSEEAARQRDSNSTS). Residues 302–322 (LMLVAIVSIFLIVNLPQAIFM) form a helical membrane-spanning segment. Over 323-334 (GLLCVCETFTIK) the chain is Extracellular. Residues 335 to 355 (IPILEGTFPAVFLIASNMIVI) form a helical membrane-spanning segment. Residues 356–451 (ATYPINFGIY…TQFTTMDRSD (96 aa)) are Cytoplasmic-facing.

Belongs to the G-protein coupled receptor 1 family. In terms of tissue distribution, expressed in head neurons including the ASE sensory neurons and the ASI and AWB chemosensory neurons, the midbody neurons SDQ, and motor neurons in the tail.

Its subcellular location is the cell membrane. In terms of biological role, G-protein coupled receptor for the neuropeptide like protein nlp-38. Plays a role in several types of aversive gustatory associative learning including gustatory plasticity and salt avoidance learning. Its role in salt avoidance learning may be through activation of the transcription factor crh-1/CREB and de novo transcription and translation, which in turn promotes the formation of long-term memory. The chain is Sex peptide receptor-related protein 2 from Caenorhabditis elegans.